Reading from the N-terminus, the 303-residue chain is Ornithine carbamoyltransferase (303 aa).

Carbamoyl phosphate is bound by residues 52–55 (STRT), glutamine 79, arginine 103, and 130–133 (HPCQ). L-ornithine is bound by residues asparagine 161, aspartate 222, and 226 to 227 (SM). Carbamoyl phosphate-binding positions include 262–263 (CL) and lysine 290.

It belongs to the aspartate/ornithine carbamoyltransferase superfamily. OTCase family.

The protein localises to the cytoplasm. The catalysed reaction is carbamoyl phosphate + L-ornithine = L-citrulline + phosphate + H(+). The protein operates within amino-acid biosynthesis; L-arginine biosynthesis; L-arginine from L-ornithine and carbamoyl phosphate: step 1/3. Reversibly catalyzes the transfer of the carbamoyl group from carbamoyl phosphate (CP) to the N(epsilon) atom of ornithine (ORN) to produce L-citrulline. The sequence is that of Ornithine carbamoyltransferase from Desulfotalea psychrophila (strain LSv54 / DSM 12343).